The primary structure comprises 323 residues: Rhazimal reductase 2 (323 aa).

Asp53 lines the NADP(+) pocket. Residue Tyr58 is the Proton donor of the active site. NADP(+) is bound by residues 167-168 (SN), Gln189, 215-220 (WSPLLS), and 289-297 (DQIQQIPQR).

Belongs to the aldo/keto reductase family. As to quaternary structure, monomer.

It catalyses the reaction rhazimol + NADP(+) = rhazimal + NADPH + 2 H(+). It participates in alkaloid biosynthesis. In terms of biological role, oxidoreductase involved in the biosynthesis of akuammilan monoterpene indole alkaloids (MIAs) natural products, components with various biological properties such as antidiabetic, antibacterial, anti-inflammatory, anticancer, and antimalarial activities. Catalyzes the conversion of rhazimal to rhazimol. The polypeptide is Rhazimal reductase 2 (Alstonia scholaris (Dogbane)).